An 880-amino-acid chain; its full sequence is MEGRRQRLLVFIFGALAITHLVQAQPPDQRGFISLDCGLPVNESPYTDPRTGLTFSSDADFILSGLRGEAGDDNTYIYRQYKDLRYFPDGIRNCYNLKVEQGINYLIRAGFGYGNYDGLNVYPKFDLHVGPNMWIAVDLEFGKDREIIYMTTSNLLQICLVKTGSTIPMISTLELRPLRNDSYLTQFGPLDLIYRRAYSSNSTGFIRYPDDIFDRKWDRYNEFETDVNTTLNVRSSSPFQVPEAVSRMGITPENASLPLRFYVSLDDDSDKVNVYFHFAEIQALRGNETREFDIELEEDIIQSAYSPTMLQSDTKYNLSPHKCSSGLCYLKLVRTPRSTLPPLISAIEAFKVVDFPYAETNPNDVAAMKDIEAFYGLKMISWQGDPCVPELLKWEDLKCSYTNKSTPPRIISLDLSSRGLKGVIAPAFQNLTELRKLDLSNNSFTGGVPEFLASMKSLSIINLNWNDLTGPLPKLLLDREKNGLKLTIQGNPKLCNDASCKNNNNQTYIVPVVASVASVLIIIAVLILILVFKKRRPTQVDSLPTVQHGLPNRPSIFTQTKRFTYSEVEALTDNFERVLGEGGFGVVYHGILNGTQPIAVKLLSQSSVQGYKEFKAEVELLLRVHHVNLVSLVGYCDEESNLALLYEYAPNGDLKQHLSGERGGSPLKWSSRLKIVVETAQGLEYLHTGCKPPMVHRDVKTTNILLDEHFQAKLADFGLSRSFPVGGETHVSTAVAGTPGYLDPEYYRTNRLNEKSDVYSFGIVLLEIITSRPVIQQTREKPHIAAWVGYMLTKGDIENVVDPRLNRDYEPTSVWKALEIAMSCVNPSSEKRPTMSQVTNELKQCLTLENSKRGVREDMGSRSSVEMSTSFTTEINPKAR.

The N-terminal stretch at 1 to 24 (MEGRRQRLLVFIFGALAITHLVQA) is a signal peptide. The Extracellular portion of the chain corresponds to 25–511 (QPPDQRGFIS…NNNNQTYIVP (487 aa)). 8 N-linked (GlcNAc...) asparagine glycosylation sites follow: Asn-180, Asn-201, Asn-228, Asn-254, Asn-287, Asn-403, Asn-430, and Asn-441. LRR repeat units follow at residues 409–430 (RIISLDLSSRGLKGVIAPAFQN), 433–455 (ELRKLDLSNNSFTGGVPEFLASM), and 457–476 (SLSIINLNWNDLTGPLPKLL). N-linked (GlcNAc...) asparagine glycosylation is present at Asn-505. A helical membrane pass occupies residues 512–532 (VVASVASVLIIIAVLILILVF). Over 533–880 (KKRRPTQVDS…FTTEINPKAR (348 aa)) the chain is Cytoplasmic. Phosphothreonine is present on Thr-564. One can recognise a Protein kinase domain in the interval 573–846 (DNFERVLGEG…QVTNELKQCL (274 aa)). Residues 579-587 (LGEGGFGVV) and Lys-601 contribute to the ATP site. Tyr-646 is subject to Phosphotyrosine. Asp-698 serves as the catalytic Proton acceptor. Position 732 is a phosphoserine (Ser-732). Thr-733 and Thr-738 each carry phosphothreonine. Phosphotyrosine is present on Tyr-746. The segment at 854-880 (GVREDMGSRSSVEMSTSFTTEINPKAR) is disordered. Residues 861 to 880 (SRSSVEMSTSFTTEINPKAR) are compositionally biased toward polar residues.

The protein belongs to the protein kinase superfamily. Ser/Thr protein kinase family.

Its subcellular location is the membrane. The enzyme catalyses L-seryl-[protein] + ATP = O-phospho-L-seryl-[protein] + ADP + H(+). It carries out the reaction L-threonyl-[protein] + ATP = O-phospho-L-threonyl-[protein] + ADP + H(+). The protein is Probable LRR receptor-like serine/threonine-protein kinase At2g28960 of Arabidopsis thaliana (Mouse-ear cress).